Here is a 498-residue protein sequence, read N- to C-terminus: MRTNPTTSSPVVSTLEEKNLGRIAQIIGPVLDVVFPPGKMPNIYNALVVKSRDTVGQQINVTCEVQQLLGNNRVRAVAMSATDGLMRGMEVIDTGAPLSVPVGGATLGRIFNVLGEPVDNLGPVDTRTTSPIHRSAPAFIQLDTKLSIFETGIKVVDLLAPYRRGGKIGLFGGAGVGKTVLIMELINNIAKAHGGVSVFGGVGERTREGNDLYMEMKESGVINEKNIAESKVALVYGQMNEPPGARMRVGLTALTMAEYFRDVNEQDVLLFIDNIFRFVQAGSEVSALLGRMPSAVGYQPTLSTEMGSLQERITSTKEGSITSIQAVYVPADDLTDPAPATTFAHLDATTVLSRVLAAKGIYPAVDPLDSTSTMLQPRIVGEEHYETAQRVKQTSQRYKELQDIIAILGLDELSEEDRLTVARARKMERFLSQPFFVAEVFTGSPGKYVGLAETIRGFQLILSGELDGLPEQAFYLVGNIDEATAKAMNLEVESKLKK.

Gly-172–Thr-179 contacts ATP.

The protein belongs to the ATPase alpha/beta chains family. As to quaternary structure, F-type ATPases have 2 components, CF(1) - the catalytic core - and CF(0) - the membrane proton channel. CF(1) has five subunits: alpha(3), beta(3), gamma(1), delta(1), epsilon(1). CF(0) has four main subunits: a(1), b(1), b'(1) and c(9-12).

Its subcellular location is the plastid. It is found in the chloroplast thylakoid membrane. The enzyme catalyses ATP + H2O + 4 H(+)(in) = ADP + phosphate + 5 H(+)(out). Functionally, produces ATP from ADP in the presence of a proton gradient across the membrane. The catalytic sites are hosted primarily by the beta subunits. This chain is ATP synthase subunit beta, chloroplastic, found in Phoenix dactylifera (Date palm).